We begin with the raw amino-acid sequence, 251 residues long: Derlin-1 (251 aa).

Serine 2 carries the N-acetylserine modification. Residues 2–15 lie on the Cytoplasmic side of the membrane; the sequence is SDIGDWFRSIPAIT. The helical transmembrane segment at 16 to 31 threads the bilayer; sequence RYWFAATVAVPLIGKL. The Lumenal segment spans residues 32–69; it reads GIISPAYFFLWPEAFLYRFQIWRPFTATFYFPVGPGTG. Residues 70-89 form a helical membrane-spanning segment; it reads FLYLVNLYFLYQYSTRLEAG. The Cytoplasmic segment spans residues 90 to 94; sequence AFDGR. The helical transmembrane segment at 95 to 115 threads the bilayer; sequence PADYLFMLLFNWICIVITGLA. At 116–122 the chain is on the lumenal side; sequence MDMQLLM. The chain crosses the membrane as a helical span at residues 123–137; that stretch reads IPLIMSVLYVWAQLN. At 138-154 the chain is on the cytoplasmic side; the sequence is RDLIVSFWFGTRFKACY. A helical membrane pass occupies residues 155 to 166; it reads LPWVILGFNYII. At 167 to 170 the chain is on the lumenal side; that stretch reads GGSV. A helical transmembrane segment spans residues 171–189; that stretch reads INELIGNLVGHLYFFLMFR. At 190–251 the chain is on the cytoplasmic side; sequence YPMDLGGRNF…WGQGFRLGDQ (62 aa). Serine 201 is modified (phosphoserine). Threonine 202 carries the post-translational modification Phosphothreonine. Serine 226 is modified (phosphoserine). The interval 229–251 is disordered; that stretch reads RAADQNGGGGRHNWGQGFRLGDQ. The SHP-box signature appears at 241-248; it reads NWGQGFRL.

It belongs to the derlin family. Homotetramer. The four subunits of the tetramer are arranged in a twofold symmetry. Forms homo- and heterooligomers with DERL2 and DERL3; binding to DERL3 is poorer than that between DERL2 and DERL3. Interacts (via SHP-box motif) with VCP. Interacts with AMFR, SELENOS, SEL1L, SELENOK and SYVN1, as well as with SEL1L-SYVN1 and VCP-SELENOS protein complexes; this interaction is weaker than that observed between DERL2 and these complexes. Interacts with NGLY1 and YOD1. Does not bind to EDEM1. Interacts with DNAJB9. Interacts with RNF103. Interacts with HM13. Interacts with XBP1 isoform 1 (via luminal/ectodomain domain); the interaction obviates the need for ectodomain shedding prior HM13/SPP-mediated XBP1 isoform 1 cleavage. Interacts with the signal recognition particle/SRP and the SRP receptor; in the process of endoplasmic reticulum stress-induced pre-emptive quality control. May interact with UBXN6. Interacts with ZFAND2B; probably through VCP. Interacts with CCDC47. Interacts with C18orf32. May interact with TRAM1. Forms a complex with SVIP and VCP/p97. In terms of tissue distribution, widely expressed, with lowest levels in brain and heart.

The protein localises to the endoplasmic reticulum membrane. Functionally, functional component of endoplasmic reticulum-associated degradation (ERAD) for misfolded lumenal proteins. Forms homotetramers which encircle a large channel traversing the endoplasmic reticulum (ER) membrane. This allows the retrotranslocation of misfolded proteins from the ER into the cytosol where they are ubiquitinated and degraded by the proteasome. The channel has a lateral gate within the membrane which provides direct access to membrane proteins with no need to reenter the ER lumen first. May mediate the interaction between VCP and the misfolded protein. Also involved in endoplasmic reticulum stress-induced pre-emptive quality control, a mechanism that selectively attenuates the translocation of newly synthesized proteins into the endoplasmic reticulum and reroutes them to the cytosol for proteasomal degradation. By controlling the steady-state expression of the IGF1R receptor, indirectly regulates the insulin-like growth factor receptor signaling pathway. The sequence is that of Derlin-1 from Mus musculus (Mouse).